Reading from the N-terminus, the 227-residue chain is Cytochrome c oxidase subunit 2 (227 aa).

The Mitochondrial intermembrane portion of the chain corresponds to 1–14 (MAYPFELGFQDATS). Residues 15-45 (PIMEELLHFHDHTLMIVFLISSLVLYIISLM) form a helical membrane-spanning segment. Topologically, residues 46-59 (LTTKLTHTSTMDAQ) are mitochondrial matrix. A helical membrane pass occupies residues 60–87 (EVETIWTILPAIILILIALPSLRILYMM). The Mitochondrial intermembrane portion of the chain corresponds to 88–227 (DEINDPSLTV…HFENWSSSML (140 aa)). 6 residues coordinate Cu cation: His161, Cys196, Glu198, Cys200, His204, and Met207. Glu198 is a binding site for Mg(2+).

The protein belongs to the cytochrome c oxidase subunit 2 family. In terms of assembly, component of the cytochrome c oxidase (complex IV, CIV), a multisubunit enzyme composed of 14 subunits. The complex is composed of a catalytic core of 3 subunits MT-CO1, MT-CO2 and MT-CO3, encoded in the mitochondrial DNA, and 11 supernumerary subunits COX4I, COX5A, COX5B, COX6A, COX6B, COX6C, COX7A, COX7B, COX7C, COX8 and NDUFA4, which are encoded in the nuclear genome. The complex exists as a monomer or a dimer and forms supercomplexes (SCs) in the inner mitochondrial membrane with NADH-ubiquinone oxidoreductase (complex I, CI) and ubiquinol-cytochrome c oxidoreductase (cytochrome b-c1 complex, complex III, CIII), resulting in different assemblies (supercomplex SCI(1)III(2)IV(1) and megacomplex MCI(2)III(2)IV(2)). Found in a complex with TMEM177, COA6, COX18, COX20, SCO1 and SCO2. Interacts with TMEM177 in a COX20-dependent manner. Interacts with COX20. Interacts with COX16. Cu cation serves as cofactor.

The protein resides in the mitochondrion inner membrane. The catalysed reaction is 4 Fe(II)-[cytochrome c] + O2 + 8 H(+)(in) = 4 Fe(III)-[cytochrome c] + 2 H2O + 4 H(+)(out). In terms of biological role, component of the cytochrome c oxidase, the last enzyme in the mitochondrial electron transport chain which drives oxidative phosphorylation. The respiratory chain contains 3 multisubunit complexes succinate dehydrogenase (complex II, CII), ubiquinol-cytochrome c oxidoreductase (cytochrome b-c1 complex, complex III, CIII) and cytochrome c oxidase (complex IV, CIV), that cooperate to transfer electrons derived from NADH and succinate to molecular oxygen, creating an electrochemical gradient over the inner membrane that drives transmembrane transport and the ATP synthase. Cytochrome c oxidase is the component of the respiratory chain that catalyzes the reduction of oxygen to water. Electrons originating from reduced cytochrome c in the intermembrane space (IMS) are transferred via the dinuclear copper A center (CU(A)) of subunit 2 and heme A of subunit 1 to the active site in subunit 1, a binuclear center (BNC) formed by heme A3 and copper B (CU(B)). The BNC reduces molecular oxygen to 2 water molecules using 4 electrons from cytochrome c in the IMS and 4 protons from the mitochondrial matrix. The polypeptide is Cytochrome c oxidase subunit 2 (MT-CO2) (Tamias amoenus (Yellow-pine chipmunk)).